Reading from the N-terminus, the 241-residue chain is Phosphatidylglycerophosphatase B (241 aa).

The helical transmembrane segment at methionine 1–glycine 21 threads the bilayer. Residues isoleucine 22 to leucine 52 are Periplasmic-facing. The chain crosses the membrane as a helical span at residues isoleucine 53–phenylalanine 62. Topologically, residues alanine 63–lysine 67 are cytoplasmic. Residues asparagine 68–threonine 91 traverse the membrane as a helical segment. Residues glycine 92–serine 158 are Periplasmic-facing. The phosphatase sequence motif I stretch occupies residues lysine 94–proline 102. Residues proline 157–histidine 160 are phosphatase sequence motif II. Residues glycine 159 to glycine 173 traverse the membrane as a helical segment. Histidine 160 serves as the catalytic Proton donor; for a subset of substrates. Topologically, residues phenylalanine 174–lysine 184 are cytoplasmic. A helical transmembrane segment spans residues alanine 185–valine 204. The tract at residues serine 202–aspartate 213 is phosphatase sequence motif III. At arginine 205 to tyrosine 210 the chain is on the periplasmic side. Residue histidine 209 is the Nucleophile of the active site. The chain crosses the membrane as a helical span at residues proline 211 to lysine 235. At alanine 236 to lysine 241 the chain is on the cytoplasmic side.

Belongs to the PA-phosphatase related phosphoesterase family.

The protein localises to the cell inner membrane. Its subcellular location is the cell outer membrane. It carries out the reaction a 1,2-diacyl-sn-glycero-3-phospho-(1'-sn-glycero-3'-phosphate) + H2O = a 1,2-diacyl-sn-glycero-3-phospho-(1'-sn-glycerol) + phosphate. The enzyme catalyses a 1,2-diacyl-sn-glycerol 3-diphosphate + H2O = a 1,2-diacyl-sn-glycero-3-phosphate + phosphate + H(+). It catalyses the reaction a 1,2-diacyl-sn-glycero-3-phosphate + H2O = a 1,2-diacyl-sn-glycerol + phosphate. The catalysed reaction is di-trans,octa-cis-undecaprenyl diphosphate + H2O = di-trans,octa-cis-undecaprenyl phosphate + phosphate + H(+). The protein operates within phospholipid metabolism; phosphatidylglycerol biosynthesis; phosphatidylglycerol from CDP-diacylglycerol: step 2/2. Functionally, catalyzes the dephosphorylation of diacylglycerol diphosphate (DGPP) to phosphatidate (PA) and the subsequent dephosphorylation of PA to diacylglycerol (DAG). Also has undecaprenyl pyrophosphate phosphatase activity, required for the biosynthesis of the lipid carrier undecaprenyl phosphate. Can also use lysophosphatidic acid (LPA) and phosphatidylglycerophosphate as substrates. The pattern of activities varies according to subcellular location, PGP phosphatase activity is higher in the cytoplasmic membrane, whereas PA and LPA phosphatase activities are higher in the outer membrane. Activity is independent of a divalent cation ion and insensitive to inhibition by N-ethylmaleimide. The chain is Phosphatidylglycerophosphatase B (pgpB) from Haemophilus influenzae (strain ATCC 51907 / DSM 11121 / KW20 / Rd).